The following is a 515-amino-acid chain: MDFQIISRFTDGGDFQWTKFGTAAFLAVLLSALAFLSYTPRVHQKSPAFTSHKLPFIGSLGFTTEQWKARNWWKRATAESKTGNFSFWLGQRHVVGVTGEAARKMFFTHEALDFVSGALIRPINIHFWPPIHDIFRPDSKSRSKNTYFLRRLYELQSTEQLNHYLPQLLKDARVGMAGLSRVTKPSVSCWETVFTQDVRLLCTDEIVADSKLLATFGRQVETLLFTFSHYNVCFPWLPSPSYYKRRQARYALYNLMEDIVNKRLKNGARGPNDPVQILLDYNDKVDHIIEFFISVLFIAPANSRIIGGQMLNIMSIYRDWQEKVYADIKAAAAAHSPDKNAPLVDQLAFIPLHAWENSFPSIDLCLQETIRMWTSFSMARLNLSPNPIPIPGSDEVIPGNTFVCYNSTEVNFSDSLYPDPKKFDPARFLDGREEFRNEAYGFLGWGRGRHPCPGMRWAKLQQNIIIAYAVAMYDWSSCDETGKPTPQAVHVKELNAARGTVLPSAYCKLVPREKV.

A helical membrane pass occupies residues F20–P40. N84, N406, and N411 each carry an N-linked (GlcNAc...) asparagine glycan. Position 452 (C452) interacts with heme.

This sequence belongs to the cytochrome P450 family. Heme serves as cofactor.

Its subcellular location is the membrane. Its pathway is secondary metabolite biosynthesis. Its function is as follows. Cytochrome P450 monooxygenase; part of the gene cluster that mediates the biosynthesis of the tetrahydroxanthone dimer neosartorin, which exhibits antibacterial activity. The two different monomeric units appear to be synthesized by the same set of enzymes, among which the Baeyer-Villiger monooxygenase nsrF is the key enzyme for the divergence of the biosynthetic routes. The pathway begins with the synthesis of atrochrysone thioester by the polyketide synthase nsrB. The atrochrysone carboxyl ACP thioesterase nsrC then breaks the thioester bond and releases the atrochrysone carboxylic acid from AacuL. Atrochrysone carboxylic acid is decarboxylated by the decarboxylase nsrE, and oxidized by the anthrone oxygenase nsrD to yield emodin. Emodin is then reduced to emodin hydroquinone by the oxidoreductase nsrR. A-ring reduction by the short chain dehydrogenase nsrJ, dehydration by the scytalone dehydratase-like protein nsrI and probable spontaneous re-oxidation, results in overall deoxygenation to chrysophanol. The Baeyer-Villiger monooxygenase nsrF accepts chrysophanol as a substrate to insert one oxygen atom at two different positions to yield the precursors of both monomric units. NsrF is promiscuous/flexible in interacting with the 2 (non methylated and methylated) aromatic rings of chrysophanol, thus diverging the biosynthetic pathway at this point. After the hydrolysis of the lactones, methylesterification by the methyltransferase nsrG yields respectively moniliphenone and 2,2',6'-trihydroxy-4-methyl-6-methoxya-cyldiphenylmethanone. The next steps are the hydroxylation by the FAD-dependent monooxygenase nsrK, followed by isomerization by the monooxygenase nsrQ. The short chain dehydrogenase/reductase nsrO then catalyzes the C-5 ketoreduction to give the xanthone skeleton of blennolide C and 5-acetylblennolide A. The acetyltransferase nsrL has a strict substrate specificity and uses only blennolide A but not blennolide C to yield 5-acetylblennolide A as the single-acetylated product. In the final step of the biosynthesis, the heterodimerization of the 2 xanthones, blennolide C and 5-acetylblennolide A, is catalyzed by the cytochrome P450 monooxygenase nsrP. NsrP can utilize at least three different xanthones as its substrates to perform the dimerization reaction. The chain is Cytochrome P450 monooxygenase nsrP from Aspergillus novofumigatus (strain IBT 16806).